The sequence spans 86 residues: Photosystem I reaction center subunit PsaK (86 aa).

A helical membrane pass occupies residues 15-34; that stretch reads PWSTQVAMVMITCNLLAIVA.

It belongs to the PsaG/PsaK family.

The protein localises to the plastid. It localises to the chloroplast thylakoid membrane. The protein is Photosystem I reaction center subunit PsaK of Pyropia yezoensis (Susabi-nori).